The chain runs to 210 residues: Thymidylate kinase (210 aa).

11–18 (GLEGAGKS) contacts ATP.

The protein belongs to the thymidylate kinase family.

The enzyme catalyses dTMP + ATP = dTDP + ADP. In terms of biological role, phosphorylation of dTMP to form dTDP in both de novo and salvage pathways of dTTP synthesis. In Histophilus somni (strain 129Pt) (Haemophilus somnus), this protein is Thymidylate kinase.